Here is a 277-residue protein sequence, read N- to C-terminus: Adaptin ear-binding coat-associated protein 1 (277 aa).

Residues 164–277 (GNITAKKGGT…APQPSNWVQF (114 aa)) are disordered. Pro residues predominate over residues 187-201 (LPPPPGGKVTIPPPS). Residue threonine 211 is modified to Phosphothreonine. Residues 222–234 (SNDSDILLDLDSP) are compositionally biased toward low complexity. A compositionally biased stretch (pro residues) spans 235 to 245 (APVPTSAPAPA). 2 short sequence motifs (WXXF motif) span residues 254 to 257 (WGDF) and 274 to 277 (WVQF). The segment covering 258–277 (STASSSVPNQAPQPSNWVQF) has biased composition (polar residues).

Belongs to the NECAP family. In terms of assembly, interacts with AP1G1 and AP2A1 components of the adapter protein complexes AP-1 and AP-2. Interacts with the GAE domain proteins GGA1, GGA2 and GGA3. Interacts with AP2A2. In terms of tissue distribution, expressed predominantly in brain (at protein level).

The protein resides in the cytoplasmic vesicle. The protein localises to the clathrin-coated vesicle membrane. Its subcellular location is the cell membrane. Involved in endocytosis. The chain is Adaptin ear-binding coat-associated protein 1 (Necap1) from Rattus norvegicus (Rat).